The following is a 211-amino-acid chain: MARLNVNPTRMELSRLKKQLTTATRGHKLLKDKQDELMRRFIALVKENNELRIQVEQEVTDALSNFVLANATLNEAFIEELVAIPAEKVELEIIEQNILSVPVPKMIFDYDESVQEAPLDYGYVNSNSELDQAFAKISSILPKLLALANVEKTCQLLSKEIEKTRRRVNALEYMTIPQLEETIYYIQMKLEENERGEITRLIKIKSMNKEN.

It belongs to the V-ATPase D subunit family.

In terms of biological role, produces ATP from ADP in the presence of a proton gradient across the membrane. This is V-type ATP synthase subunit D from Enterococcus faecalis (strain ATCC 700802 / V583).